The primary structure comprises 945 residues: Leucine--tRNA ligase (945 aa).

Residues 43 to 53 (PYPNGAIHIGH) carry the 'HIGH' region motif. The 'KMSKS' region motif lies at 638 to 642 (KMSKS). Lys641 contributes to the ATP binding site.

The protein belongs to the class-I aminoacyl-tRNA synthetase family.

The protein resides in the cytoplasm. It catalyses the reaction tRNA(Leu) + L-leucine + ATP = L-leucyl-tRNA(Leu) + AMP + diphosphate. The polypeptide is Leucine--tRNA ligase (Pyrobaculum aerophilum (strain ATCC 51768 / DSM 7523 / JCM 9630 / CIP 104966 / NBRC 100827 / IM2)).